A 206-amino-acid chain; its full sequence is Triosephosphate isomerase (206 aa).

The active-site Electrophile is H76. Catalysis depends on E146, which acts as the Proton acceptor.

The protein belongs to the triosephosphate isomerase family. As to quaternary structure, homodimer.

The enzyme catalyses D-glyceraldehyde 3-phosphate = dihydroxyacetone phosphate. The protein operates within carbohydrate biosynthesis; gluconeogenesis. It functions in the pathway carbohydrate degradation; glycolysis; D-glyceraldehyde 3-phosphate from glycerone phosphate: step 1/1. This is Triosephosphate isomerase (Tpi) from Aedes togoi (Mosquito).